A 180-amino-acid chain; its full sequence is Kappa-casein (180 aa).

Positions 1 to 21 are cleaved as a signal peptide; sequence MMKHFLLVVNILAVTLPFLAA. 4 O-linked (GalNAc...) threonine glycosylation sites follow: T132, T142, T147, and T153. Phosphoserine; alternate is present on S160. Residue S160 is glycosylated (O-linked (GalNAc...) serine; alternate).

It belongs to the kappa-casein family. Mammary gland specific. Secreted in milk.

The protein localises to the secreted. In terms of biological role, kappa-casein stabilizes micelle formation, preventing casein precipitation in milk. The chain is Kappa-casein (CSN3) from Oryctolagus cuniculus (Rabbit).